A 418-amino-acid polypeptide reads, in one-letter code: Lariat debranching enzyme (418 aa).

A divalent metal cation is bound by residues Cys8, His10, Asp39, and Asn84. A lariat recognition loop region spans residues 124 to 154; it reads SGIYNERHYRSGHFERPPYNESTIRSVYHVR. A divalent metal cation contacts are provided by His174, His226, and His228. Residues 372 to 418 are disordered; the sequence is GERTDIPASLAPSDLPTYDSEEIPIDDIDEIEEMEEAKADDHTRDDA. Over residues 390-406 the composition is skewed to acidic residues; the sequence is DSEEIPIDDIDEIEEME. A compositionally biased stretch (basic and acidic residues) spans 407 to 418; sequence EAKADDHTRDDA.

This sequence belongs to the lariat debranching enzyme family. It depends on Fe(2+) as a cofactor. Zn(2+) is required as a cofactor. Requires Mn(2+) as cofactor. Widely expressed. Expressed in roots, stems, cauline and rosette leaves, flower buds and siliques.

The protein localises to the nucleus. Its activity is regulated as follows. Active in presence of diverse metals including Fe(2+), Zn(2+), Mn(2+). Binds two metal cations in two adjacent alpha and beta metal-binding pockets. Its function is as follows. Cleaves the 2'-5' phosphodiester linkage at the branch point of lariat intron pre-mRNAs after splicing and converts them into linear molecules that are subsequently degraded. It thereby facilitates ribonucleotide turnover. It may also participate in retrovirus replication via an RNA lariat intermediate in cDNA synthesis. Plays en essential role during embryogenesis. In Arabidopsis thaliana (Mouse-ear cress), this protein is Lariat debranching enzyme (DBR1).